The primary structure comprises 155 residues: MPSTSMIEDRGEIERRRFEYLDHPADIQLHSWGTTIERAFEACLVSMFGYMTDLEKVEEQYEFYWKVSGDSMDGLLFQFLDEALNSFHAEPCFVAKRVEIMRFDKEKLEIEFRGWGESFDTSKHETEADIKSPTYSNMQIIEKSDRCDVYVIVDI.

Asp-26, Asp-154, and Ile-155 together coordinate Ca(2+).

Belongs to the archease family.

In terms of biological role, component of the tRNA-splicing ligase complex required to facilitate the enzymatic turnover of catalytic subunit RtcB. This is Protein archease-like from Caenorhabditis briggsae.